A 240-amino-acid chain; its full sequence is Probable transcriptional regulatory protein MXAN_7062 (240 aa).

Belongs to the TACO1 family.

The protein localises to the cytoplasm. The polypeptide is Probable transcriptional regulatory protein MXAN_7062 (Myxococcus xanthus (strain DK1622)).